The following is a 541-amino-acid chain: Glutamyl-tRNA(Gln) amidotransferase subunit A, chloroplastic/mitochondrial (541 aa).

Catalysis depends on charge relay system residues Lys121 and Ser196. The active-site Acyl-ester intermediate is Ser220.

This sequence belongs to the amidase family. GatA subfamily. Subunit of the heterotrimeric GatCAB amidotransferase (AdT) complex, composed of A, B and C subunits.

It localises to the mitochondrion. The protein resides in the plastid. It is found in the chloroplast stroma. It carries out the reaction L-glutamyl-tRNA(Gln) + L-glutamine + ATP + H2O = L-glutaminyl-tRNA(Gln) + L-glutamate + ADP + phosphate + H(+). In terms of biological role, allows the formation of correctly charged Gln-tRNA(Gln) through the transamidation of misacylated Glu-tRNA(Gln) in chloroplasts and mitochondria. The reaction takes place in the presence of glutamine and ATP through an activated gamma-phospho-Glu-tRNA(Gln). The polypeptide is Glutamyl-tRNA(Gln) amidotransferase subunit A, chloroplastic/mitochondrial (Sorghum bicolor (Sorghum)).